A 241-amino-acid chain; its full sequence is Small ribosomal subunit protein uS5 (241 aa).

The disordered stretch occupies residues 1-53 (MSDNEKETQVAEETQNTQAAAESNNEDRKSRRGQRGEGRRGERRNRREESHEN). Positions 11–22 (AEETQNTQAAAE) are enriched in low complexity. The segment covering 25–53 (NEDRKSRRGQRGEGRRGERRNRREESHEN) has biased composition (basic and acidic residues). One can recognise an S5 DRBM domain in the interval 55–118 (MLDRVVTINR…LDAKKHMFTV (64 aa)).

This sequence belongs to the universal ribosomal protein uS5 family. As to quaternary structure, part of the 30S ribosomal subunit. Contacts proteins S4 and S8.

Functionally, with S4 and S12 plays an important role in translational accuracy. Located at the back of the 30S subunit body where it stabilizes the conformation of the head with respect to the body. The polypeptide is Small ribosomal subunit protein uS5 (Bifidobacterium adolescentis (strain ATCC 15703 / DSM 20083 / NCTC 11814 / E194a)).